Reading from the N-terminus, the 357-residue chain is Cobalt-precorrin-5B C(1)-methyltransferase (357 aa).

This sequence belongs to the CbiD family.

It carries out the reaction Co-precorrin-5B + S-adenosyl-L-methionine = Co-precorrin-6A + S-adenosyl-L-homocysteine. It participates in cofactor biosynthesis; adenosylcobalamin biosynthesis; cob(II)yrinate a,c-diamide from sirohydrochlorin (anaerobic route): step 6/10. Functionally, catalyzes the methylation of C-1 in cobalt-precorrin-5B to form cobalt-precorrin-6A. The sequence is that of Cobalt-precorrin-5B C(1)-methyltransferase from Alkaliphilus oremlandii (strain OhILAs) (Clostridium oremlandii (strain OhILAs)).